The primary structure comprises 421 residues: Tyrosine--tRNA ligase (421 aa).

Tyr-35 contacts L-tyrosine. A 'HIGH' region motif is present at residues 40–49 (PTADSLHIGH). 2 residues coordinate L-tyrosine: Tyr-170 and Gln-174. Residues 232–236 (KFGKT) carry the 'KMSKS' region motif. Lys-235 serves as a coordination point for ATP. In terms of domain architecture, S4 RNA-binding spans 355-421 (LSLVDVLVES…GKKKYFLITY (67 aa)).

It belongs to the class-I aminoacyl-tRNA synthetase family. TyrS type 1 subfamily. As to quaternary structure, homodimer.

It is found in the cytoplasm. The catalysed reaction is tRNA(Tyr) + L-tyrosine + ATP = L-tyrosyl-tRNA(Tyr) + AMP + diphosphate + H(+). Catalyzes the attachment of tyrosine to tRNA(Tyr) in a two-step reaction: tyrosine is first activated by ATP to form Tyr-AMP and then transferred to the acceptor end of tRNA(Tyr). The protein is Tyrosine--tRNA ligase of Bacillus velezensis (strain DSM 23117 / BGSC 10A6 / LMG 26770 / FZB42) (Bacillus amyloliquefaciens subsp. plantarum).